We begin with the raw amino-acid sequence, 208 residues long: Uracil phosphoribosyltransferase (208 aa).

Residues Arg-78, Arg-103, and 130-138 (DPMLATGGS) each bind 5-phospho-alpha-D-ribose 1-diphosphate. Uracil-binding positions include Ile-193 and 198-200 (GDA). Asp-199 contributes to the 5-phospho-alpha-D-ribose 1-diphosphate binding site.

This sequence belongs to the UPRTase family. The cofactor is Mg(2+).

It carries out the reaction UMP + diphosphate = 5-phospho-alpha-D-ribose 1-diphosphate + uracil. Its pathway is pyrimidine metabolism; UMP biosynthesis via salvage pathway; UMP from uracil: step 1/1. Its activity is regulated as follows. Allosterically activated by GTP. Functionally, catalyzes the conversion of uracil and 5-phospho-alpha-D-ribose 1-diphosphate (PRPP) to UMP and diphosphate. The polypeptide is Uracil phosphoribosyltransferase (Actinobacillus pleuropneumoniae serotype 5b (strain L20)).